We begin with the raw amino-acid sequence, 662 residues long: uncharacterized protein (662 aa).

5 disordered regions span residues 1–94 (MSQR…NENN), 107–237 (DHNN…VKYH), 288–328 (ETTS…TPSA), 406–440 (QSSF…PIQM), and 506–580 (QNSI…MVSP). Residues 25–49 (TTTTTPTPTTTTTTTSSLSSSTSST) show a composition bias toward low complexity. The span at 77–87 (DNIKLDNEKTF) shows a compositional bias: basic and acidic residues. A compositionally biased stretch (low complexity) spans 109 to 161 (NNNNNNNNNNNNNNNNNNNNNNNNNNNNNNNNNNNNNNNNNNNNNNNNNNNNN). Residues 162 to 176 (DTQKGTNKNENNCTD) show a composition bias toward polar residues. The span at 183–196 (STSTTSSSETGSST) shows a compositional bias: low complexity. A compositionally biased stretch (polar residues) spans 203 to 212 (KTPQSCLKKS). A compositionally biased stretch (low complexity) spans 213 to 224 (NNNNNDNNNNNN). A compositionally biased stretch (basic residues) spans 226–235 (KTPRSTKKVK). Composition is skewed to low complexity over residues 288-308 (ETTS…TPIP), 413-434 (PTNN…TTTP), 515-526 (PTKSSSSTSIQQ), and 535-575 (NINN…NNNN).

This is an uncharacterized protein from Dictyostelium discoideum (Social amoeba).